Here is a 1364-residue protein sequence, read N- to C-terminus: DNA-directed RNA polymerase subunit beta (1364 aa).

This sequence belongs to the RNA polymerase beta chain family. The RNAP catalytic core consists of 2 alpha, 1 beta, 1 beta' and 1 omega subunit. When a sigma factor is associated with the core the holoenzyme is formed, which can initiate transcription.

It catalyses the reaction RNA(n) + a ribonucleoside 5'-triphosphate = RNA(n+1) + diphosphate. DNA-dependent RNA polymerase catalyzes the transcription of DNA into RNA using the four ribonucleoside triphosphates as substrates. This Desulfatibacillum aliphaticivorans protein is DNA-directed RNA polymerase subunit beta.